An 85-amino-acid chain; its full sequence is Small ribosomal subunit protein uS17 (85 aa).

The protein belongs to the universal ribosomal protein uS17 family. In terms of assembly, part of the 30S ribosomal subunit.

Functionally, one of the primary rRNA binding proteins, it binds specifically to the 5'-end of 16S ribosomal RNA. This is Small ribosomal subunit protein uS17 from Ruminiclostridium cellulolyticum (strain ATCC 35319 / DSM 5812 / JCM 6584 / H10) (Clostridium cellulolyticum).